The sequence spans 248 residues: Trihelix transcription factor ENAP2 (248 aa).

Residues 1 to 13 (METTTPQSKSSVS) are compositionally biased toward polar residues. Residues 1–20 (METTTPQSKSSVSHRPPLGR) are disordered. A DNA-binding region (MADF) is located at residues 24–113 (WSEEATATLV…RLDVLIGPVV (90 aa)). The Nuclear localization signal motif lies at 69–76 (RKKTDLQC). The disordered stretch occupies residues 123 to 150 (SAPFKNHLNPTGSNSTGSSLEDDDEDDD). The segment covering 130 to 141 (LNPTGSNSTGSS) has biased composition (polar residues). A coiled-coil region spans residues 190 to 210 (YERIEGKKQQMMIELEKQRME).

Interacts with the Agrobacterium tumefaciens virulence protein F (VirF) in the nucleus. Binds to EIN2 C-terminal region in the presence of ethylene.

It localises to the nucleus. Its subcellular location is the nucleoplasm. Its function is as follows. Probable transcription regulator. Promotes histone acetylation during ethylene signaling in an EIN2-dependent manner, thus regulating positively ethylene-responsive genes. In Arabidopsis thaliana (Mouse-ear cress), this protein is Trihelix transcription factor ENAP2.